The primary structure comprises 318 residues: Magnetosome protein MamM (318 aa).

The segment at Met1–Asp210 is transmembrane domain (TMD). 4 consecutive transmembrane segments (helical) span residues Ile13 to Leu33, Ala39 to Ile59, Phe81 to His101, and Leu117 to Ser137. Positions His211 to Asn318 are C-terminal domain (CTD). 4 residues coordinate Fe cation: Asp249, His264, His285, and Glu289.

It belongs to the cation diffusion facilitator (CDF) transporter (TC 2.A.4) family. As to quaternary structure, forms homodimers via its C-terminal domain (CTD) in the presence of metal cations. Interacts with MamB via their CTD.

It is found in the magnetosome membrane. The protein resides in the cell inner membrane. In terms of biological role, probably plays a role in biomineralization. Required for stable accumulation of MamB. Probably binds and transports iron. May nucleate iron crystal formation. This is Magnetosome protein MamM (mamM) from Paramagnetospirillum magneticum (strain ATCC 700264 / AMB-1) (Magnetospirillum magneticum).